The chain runs to 56 residues: Ovomucoid (56 aa).

Residues 6–56 form the Kazal-like domain; sequence VDCSEYPKPACTLEYRPLCGSDSKTYANKCNFCNAVVESNGTLTLSHFGKC. Cystine bridges form between C8-C38, C16-C35, and C24-C56. The N-linked (GlcNAc...) asparagine glycan is linked to N45.

The protein localises to the secreted. The chain is Ovomucoid from Oreortyx pictus (Mountain quail).